The following is a 180-amino-acid chain: ATP-dependent protease subunit HslV (180 aa).

T5 is a catalytic residue. G165, C168, and T171 together coordinate Na(+).

The protein belongs to the peptidase T1B family. HslV subfamily. In terms of assembly, a double ring-shaped homohexamer of HslV is capped on each side by a ring-shaped HslU homohexamer. The assembly of the HslU/HslV complex is dependent on binding of ATP.

It localises to the cytoplasm. The catalysed reaction is ATP-dependent cleavage of peptide bonds with broad specificity.. Allosterically activated by HslU binding. In terms of biological role, protease subunit of a proteasome-like degradation complex believed to be a general protein degrading machinery. In Helicobacter acinonychis (strain Sheeba), this protein is ATP-dependent protease subunit HslV.